Consider the following 756-residue polypeptide: Cellulose synthase catalytic subunit [UDP-forming] (756 aa).

A run of 4 helical transmembrane segments spans residues 27–47 (ASYI…TVTL), 49–69 (NNEQ…VGRG), 106–126 (GILG…LFLS), and 167–187 (LTVL…VYIL). The segment at 147 to 242 (DWPTVDIFIP…YILILDCDHI (96 aa)) is catalytic subdomain A. Asp-189 is a catalytic residue. Residues Asp-238 and Asp-240 each contribute to the substrate site. Residues 319–379 (EAIESIGGFA…GQRMRWARGM (61 aa)) are catalytic subdomain B. Asp-335 is a catalytic residue. 5 helical membrane-spanning segments follow: residues 409–429 (FFFA…LFAG), 432–452 (IIAA…FHSI), 470–490 (VYET…LLFP), 517–537 (NIIF…ELIV), and 551–571 (LLNC…IAVG). Positions 576–681 (QVRYNHRVEA…ERDIVRFVFG (106 aa)) constitute a PilZ domain. The segment at 721-756 (NSRPKKKPLALPVERREPTTIHSGQTQEGKISRAAS) is disordered. Over residues 740–756 (TIHSGQTQEGKISRAAS) the composition is skewed to polar residues.

It belongs to the glycosyltransferase 2 family. The cofactor is Mg(2+).

Its subcellular location is the cell inner membrane. It catalyses the reaction [(1-&gt;4)-beta-D-glucosyl](n) + UDP-alpha-D-glucose = [(1-&gt;4)-beta-D-glucosyl](n+1) + UDP + H(+). It functions in the pathway glycan metabolism; bacterial cellulose biosynthesis. With respect to regulation, activated by bis-(3'-5') cyclic diguanylic acid (c-di-GMP). Its function is as follows. Catalytic subunit of cellulose synthase. It polymerizes uridine 5'-diphosphate glucose to cellulose. The thick cellulosic mats generated by this enzyme probably provide a specialized protective environment to the bacterium. This chain is Cellulose synthase catalytic subunit [UDP-forming] (bcsA), found in Komagataeibacter sucrofermentans (strain ATCC 700178 / DSM 15973 / CECT 7291 / JCM 9730 / LMG 18788 / BPR 2001) (Acetobacter xylinus subsp. sucrofermentans).